The primary structure comprises 367 residues: D-alanine--D-alanine ligase (367 aa).

Residues 145-351 (KRLLRDAGLP…QPALMDELVA (207 aa)) enclose the ATP-grasp domain. 174–229 (RAVGSSELFVKPANLGSSVGISKTRDAAEFEAACQLALRFDRKILIERCIAPVREI) contributes to the ATP binding site. Residues Asp306, Glu318, and Asn320 each contribute to the Mg(2+) site.

Belongs to the D-alanine--D-alanine ligase family. Requires Mg(2+) as cofactor. The cofactor is Mn(2+).

The protein resides in the cytoplasm. The catalysed reaction is 2 D-alanine + ATP = D-alanyl-D-alanine + ADP + phosphate + H(+). The protein operates within cell wall biogenesis; peptidoglycan biosynthesis. Functionally, cell wall formation. This is D-alanine--D-alanine ligase from Bradyrhizobium sp. (strain ORS 278).